The sequence spans 362 residues: MASRREVRCRCGRRMWVQPDARTVQCSTCHTVTQLYSLVDIARGANRIIHGFQQLLRQHQPQHHEQQQQQMMAQPPPRLLEPLPSPFGKKRAVLCGVNYKGKSYSLKGCISDAKSMRSLLVQQMGFPIDSILMLTEDEASPQRIPTKRNIRKAMRWLVEGNRARDSLVFHFSGHGSQQNDYNGDEIDGQDEALCPLDHETEGKIIDDEINRILVRPLVHGAKLHAVIDACNSGTVLDLPFICRMERNGSYEWEDHRSVRAYKGTDGGAAFCFSACDDDESSGYTPVFTGKNTGAMTYSFIKAVKTAGPAPTYGHLLNLMCSAIREAQSRLAFNGDYTSSDASAEPLLTSSEEFDVYATKFVL.

Catalysis depends on residues H174 and C230.

The protein belongs to the peptidase C14B family.

The protein is Metacaspase-3 (AMC3) of Arabidopsis thaliana (Mouse-ear cress).